A 126-amino-acid chain; its full sequence is MPKEYSRSQRVVEQIRRELAELIRLEVKDPRVGFITLTDVEISPDYAHAKVFFTSMTGEESVPEILQGLRRASGFLRRELGRRVRIHTTPELHFHYDRSVEEGSRLSRLIDDAVREDEIRHRDDDN.

Belongs to the RbfA family. In terms of assembly, monomer. Binds 30S ribosomal subunits, but not 50S ribosomal subunits or 70S ribosomes.

It is found in the cytoplasm. One of several proteins that assist in the late maturation steps of the functional core of the 30S ribosomal subunit. Associates with free 30S ribosomal subunits (but not with 30S subunits that are part of 70S ribosomes or polysomes). Required for efficient processing of 16S rRNA. May interact with the 5'-terminal helix region of 16S rRNA. The polypeptide is Ribosome-binding factor A (Azoarcus sp. (strain BH72)).